Here is a 742-residue protein sequence, read N- to C-terminus: Phosphoribosylformylglycinamidine synthase subunit PurL (742 aa).

Histidine 53 is a catalytic residue. Residues tyrosine 56 and lysine 95 each contribute to the ATP site. Glutamate 97 serves as a coordination point for Mg(2+). Substrate is bound by residues 98 to 101 (SHNH) and arginine 120. Residue histidine 99 is the Proton acceptor of the active site. Aspartate 121 contributes to the Mg(2+) binding site. Residue glutamine 244 coordinates substrate. Aspartate 274 provides a ligand contact to Mg(2+). 318–320 (ESQ) is a binding site for substrate. Positions 501 and 538 each coordinate ATP. Asparagine 539 is a Mg(2+) binding site. A substrate-binding site is contributed by serine 541.

Belongs to the FGAMS family. Monomer. Part of the FGAM synthase complex composed of 1 PurL, 1 PurQ and 2 PurS subunits.

It is found in the cytoplasm. The catalysed reaction is N(2)-formyl-N(1)-(5-phospho-beta-D-ribosyl)glycinamide + L-glutamine + ATP + H2O = 2-formamido-N(1)-(5-O-phospho-beta-D-ribosyl)acetamidine + L-glutamate + ADP + phosphate + H(+). The protein operates within purine metabolism; IMP biosynthesis via de novo pathway; 5-amino-1-(5-phospho-D-ribosyl)imidazole from N(2)-formyl-N(1)-(5-phospho-D-ribosyl)glycinamide: step 1/2. Its function is as follows. Part of the phosphoribosylformylglycinamidine synthase complex involved in the purines biosynthetic pathway. Catalyzes the ATP-dependent conversion of formylglycinamide ribonucleotide (FGAR) and glutamine to yield formylglycinamidine ribonucleotide (FGAM) and glutamate. The FGAM synthase complex is composed of three subunits. PurQ produces an ammonia molecule by converting glutamine to glutamate. PurL transfers the ammonia molecule to FGAR to form FGAM in an ATP-dependent manner. PurS interacts with PurQ and PurL and is thought to assist in the transfer of the ammonia molecule from PurQ to PurL. This Limosilactobacillus reuteri (strain DSM 20016) (Lactobacillus reuteri) protein is Phosphoribosylformylglycinamidine synthase subunit PurL.